The sequence spans 616 residues: Chaperone protein HscA (616 aa).

It belongs to the heat shock protein 70 family.

Its function is as follows. Chaperone involved in the maturation of iron-sulfur cluster-containing proteins. Has a low intrinsic ATPase activity which is markedly stimulated by HscB. Involved in the maturation of IscU. This chain is Chaperone protein HscA, found in Escherichia coli (strain SMS-3-5 / SECEC).